The chain runs to 554 residues: MFS-type transporter tstD (554 aa).

Composition is skewed to polar residues over residues 1–10 (MPEPFNSTMP) and 27–38 (QDSNQPPEMSAS). The interval 1 to 68 (MPEPFNSTMP…ESENNEPYSV (68 aa)) is disordered. N-linked (GlcNAc...) asparagine glycosylation occurs at Asn6. The span at 39-48 (SEKKHPENEN) shows a compositional bias: basic and acidic residues. Residues 76–96 (LMVLAASLAGFFSPLSASIYY) traverse the membrane as a helical segment. 2 N-linked (GlcNAc...) asparagine glycosylation sites follow: Asn107 and Asn114. 5 helical membrane passes run 115 to 135 (LTVT…ASFS), 142 to 162 (PGYA…ALQN), 173 to 193 (LQSA…SDII), 202 to 222 (IAFA…IGGL), and 231 to 251 (WIFW…FLFF). Residues 281–300 (KEKQRQQRAENEEENANRQR) are disordered. The next 3 membrane-spanning stretches (helical) occupy residues 311 to 331 (VFVV…GVAF), 354 to 374 (IKVA…ALST), and 413 to 433 (IALP…WLMT). N-linked (GlcNAc...) asparagine glycosylation occurs at Asn437. 3 helical membrane-spanning segments follow: residues 442-462 (IILL…LNVL), 473-493 (MVTA…AAMI), and 504-524 (WSYT…LLTM).

This sequence belongs to the major facilitator superfamily.

The protein resides in the membrane. Its function is as follows. MFS-type transporter; part of the gene cluster that mediates the biosynthesis of the antihypercholesterolemic agents phomoidrides which are dimeric anhydrides. This chain is MFS-type transporter tstD, found in Talaromyces stipitatus (strain ATCC 10500 / CBS 375.48 / QM 6759 / NRRL 1006) (Penicillium stipitatum).